Reading from the N-terminus, the 176-residue chain is ATP-dependent protease subunit HslV (176 aa).

The active site involves Thr2. Residues Gly157, Cys160, and Thr163 each contribute to the Na(+) site.

The protein belongs to the peptidase T1B family. HslV subfamily. A double ring-shaped homohexamer of HslV is capped on each side by a ring-shaped HslU homohexamer. The assembly of the HslU/HslV complex is dependent on binding of ATP.

It is found in the cytoplasm. The enzyme catalyses ATP-dependent cleavage of peptide bonds with broad specificity.. Allosterically activated by HslU binding. Protease subunit of a proteasome-like degradation complex believed to be a general protein degrading machinery. The polypeptide is ATP-dependent protease subunit HslV (Pseudomonas syringae pv. tomato (strain ATCC BAA-871 / DC3000)).